The following is a 399-amino-acid chain: S-adenosylmethionine synthase (399 aa).

Histidine 17 provides a ligand contact to ATP. Residue aspartate 19 coordinates Mg(2+). Glutamate 45 is a K(+) binding site. Residues glutamate 58 and glutamine 101 each contribute to the L-methionine site. The flexible loop stretch occupies residues 101 to 111 (QSADIAMGVDQ). ATP contacts are provided by residues 177–179 (DGK), 244–245 (RF), aspartate 253, 259–260 (RK), alanine 276, and lysine 280. Residue aspartate 253 coordinates L-methionine. Lysine 284 contributes to the L-methionine binding site.

This sequence belongs to the AdoMet synthase family. Homotetramer; dimer of dimers. The cofactor is Mg(2+). K(+) is required as a cofactor.

It is found in the cytoplasm. The catalysed reaction is L-methionine + ATP + H2O = S-adenosyl-L-methionine + phosphate + diphosphate. Its pathway is amino-acid biosynthesis; S-adenosyl-L-methionine biosynthesis; S-adenosyl-L-methionine from L-methionine: step 1/1. Functionally, catalyzes the formation of S-adenosylmethionine (AdoMet) from methionine and ATP. The overall synthetic reaction is composed of two sequential steps, AdoMet formation and the subsequent tripolyphosphate hydrolysis which occurs prior to release of AdoMet from the enzyme. The polypeptide is S-adenosylmethionine synthase (Bacillus cereus (strain ATCC 10987 / NRS 248)).